The following is a 162-amino-acid chain: MSYVGHLVKSFTLWEFVKAHALTLKYFFKPKATINYPFEKNPLSPRFRGEHALRRYPNGEERCIACKLCEAVCPAQAITIEAEPRDDGSRRTTRYDIDMTKCIYCGFCQEACPVDAIVEGPNFEYATETREELLYDKAKLLANGDKWERAIAANLAADAPYR.

2 4Fe-4S ferredoxin-type domains span residues 53-83 (LRRY…IEAE) and 93-122 (TRYD…EGPN). [4Fe-4S] cluster is bound by residues Cys-63, Cys-66, Cys-69, Cys-73, Cys-102, Cys-105, Cys-108, and Cys-112.

The protein belongs to the complex I 23 kDa subunit family. NDH-1 is composed of 14 different subunits. Subunits NuoA, H, J, K, L, M, N constitute the membrane sector of the complex. It depends on [4Fe-4S] cluster as a cofactor.

Its subcellular location is the cell inner membrane. The catalysed reaction is a quinone + NADH + 5 H(+)(in) = a quinol + NAD(+) + 4 H(+)(out). Functionally, NDH-1 shuttles electrons from NADH, via FMN and iron-sulfur (Fe-S) centers, to quinones in the respiratory chain. The immediate electron acceptor for the enzyme in this species is believed to be ubiquinone. Couples the redox reaction to proton translocation (for every two electrons transferred, four hydrogen ions are translocated across the cytoplasmic membrane), and thus conserves the redox energy in a proton gradient. This chain is NADH-quinone oxidoreductase subunit I, found in Sphingopyxis alaskensis (strain DSM 13593 / LMG 18877 / RB2256) (Sphingomonas alaskensis).